The following is a 194-amino-acid chain: Large ribosomal subunit protein bL25 (194 aa).

Belongs to the bacterial ribosomal protein bL25 family. CTC subfamily. Part of the 50S ribosomal subunit; part of the 5S rRNA/L5/L18/L25 subcomplex. Contacts the 5S rRNA. Binds to the 5S rRNA independently of L5 and L18.

In terms of biological role, this is one of the proteins that binds to the 5S RNA in the ribosome where it forms part of the central protuberance. The polypeptide is Large ribosomal subunit protein bL25 (Parabacteroides distasonis (strain ATCC 8503 / DSM 20701 / CIP 104284 / JCM 5825 / NCTC 11152)).